Reading from the N-terminus, the 80-residue chain is Pancreatic polypeptide (80 aa).

A signal peptide spans 1 to 25 (MPPRWASLLLLACSLLLLAVPPGTA). Tyrosine amide is present on Tyr61. The propeptide occupies 65-80 (SSSRVLCEEPMGAAGC).

This sequence belongs to the NPY family.

It localises to the secreted. Functionally, hormone secreted by pancreatic cells that acts as a regulator of pancreatic and gastrointestinal functions. The chain is Pancreatic polypeptide (PPY) from Gallus gallus (Chicken).